Reading from the N-terminus, the 145-residue chain is D-aminoacyl-tRNA deacylase (145 aa).

Positions 137–138 (GP) match the Gly-cisPro motif, important for rejection of L-amino acids motif.

This sequence belongs to the DTD family. In terms of assembly, homodimer.

Its subcellular location is the cytoplasm. It carries out the reaction glycyl-tRNA(Ala) + H2O = tRNA(Ala) + glycine + H(+). The catalysed reaction is a D-aminoacyl-tRNA + H2O = a tRNA + a D-alpha-amino acid + H(+). An aminoacyl-tRNA editing enzyme that deacylates mischarged D-aminoacyl-tRNAs. Also deacylates mischarged glycyl-tRNA(Ala), protecting cells against glycine mischarging by AlaRS. Acts via tRNA-based rather than protein-based catalysis; rejects L-amino acids rather than detecting D-amino acids in the active site. By recycling D-aminoacyl-tRNA to D-amino acids and free tRNA molecules, this enzyme counteracts the toxicity associated with the formation of D-aminoacyl-tRNA entities in vivo and helps enforce protein L-homochirality. The chain is D-aminoacyl-tRNA deacylase from Salmonella typhi.